Reading from the N-terminus, the 252-residue chain is Cell division protein ZapD (252 aa).

This sequence belongs to the ZapD family. In terms of assembly, interacts with FtsZ.

It is found in the cytoplasm. Its function is as follows. Cell division factor that enhances FtsZ-ring assembly. Directly interacts with FtsZ and promotes bundling of FtsZ protofilaments, with a reduction in FtsZ GTPase activity. The sequence is that of Cell division protein ZapD from Ralstonia nicotianae (strain ATCC BAA-1114 / GMI1000) (Ralstonia solanacearum).